A 94-amino-acid chain; its full sequence is Integration host factor subunit beta (94 aa).

The protein belongs to the bacterial histone-like protein family. As to quaternary structure, heterodimer of an alpha and a beta chain.

This protein is one of the two subunits of integration host factor, a specific DNA-binding protein that functions in genetic recombination as well as in transcriptional and translational control. This chain is Integration host factor subunit beta (ihfB), found in Dickeya dadantii (strain 3937) (Erwinia chrysanthemi (strain 3937)).